The chain runs to 364 residues: Aminomethyltransferase (364 aa).

It belongs to the GcvT family. In terms of assembly, the glycine cleavage system is composed of four proteins: P, T, L and H.

The enzyme catalyses N(6)-[(R)-S(8)-aminomethyldihydrolipoyl]-L-lysyl-[protein] + (6S)-5,6,7,8-tetrahydrofolate = N(6)-[(R)-dihydrolipoyl]-L-lysyl-[protein] + (6R)-5,10-methylene-5,6,7,8-tetrahydrofolate + NH4(+). In terms of biological role, the glycine cleavage system catalyzes the degradation of glycine. This is Aminomethyltransferase from Shewanella oneidensis (strain ATCC 700550 / JCM 31522 / CIP 106686 / LMG 19005 / NCIMB 14063 / MR-1).